Reading from the N-terminus, the 73-residue chain is UPF0346 protein SSP1318 (73 aa).

The protein belongs to the UPF0346 family.

This chain is UPF0346 protein SSP1318, found in Staphylococcus saprophyticus subsp. saprophyticus (strain ATCC 15305 / DSM 20229 / NCIMB 8711 / NCTC 7292 / S-41).